Reading from the N-terminus, the 535-residue chain is E3 ubiquitin-protein ligase rnf168 (535 aa).

The RING-type zinc finger occupies 16-55 (CPICQEILLEPVTLPCKHTLCNPCFQMTVEKASLCCPFCR). The LR motif 1 signature appears at 112–130 (LCKPGEIRQEYEAEVSKIE). The short motif at 145-153 (EDYIQKLLA) is the UMI motif element. 2 short sequence motifs (MIU motif) span residues 170–193 (IEEQ…LSNA) and 406–429 (RRKQ…KELK). Over residues 429–443 (KQVNRGKGSPDEYQL) the composition is skewed to basic and acidic residues. The interval 429–535 (KQVNRGKGSP…LDLFQRSAGK (107 aa)) is disordered. Residues 433-444 (RGKGSPDEYQLR) carry the LR motif 2 motif. Composition is skewed to polar residues over residues 462 to 478 (NEQT…QSGY) and 492 to 507 (ITSS…TNTE).

This sequence belongs to the RNF168 family. In terms of assembly, monomer.

The protein resides in the nucleus. The enzyme catalyses S-ubiquitinyl-[E2 ubiquitin-conjugating enzyme]-L-cysteine + [acceptor protein]-L-lysine = [E2 ubiquitin-conjugating enzyme]-L-cysteine + N(6)-ubiquitinyl-[acceptor protein]-L-lysine.. It functions in the pathway protein modification; protein ubiquitination. In terms of biological role, E3 ubiquitin-protein ligase required for accumulation of repair proteins to sites of DNA damage. Acts with ube2n/ubc13 to amplify the rnf8-dependent histone ubiquitination. Recruited to sites of DNA damage at double-strand breaks (DSBs) by binding to ubiquitinated histone H2A and ubiquitinates histone H2A and H2AX, leading to amplify the rnf8-dependent H2A ubiquitination and promoting the formation of 'Lys-63'-linked ubiquitin conjugates. This leads to concentrate ubiquitinated histones H2A and H2AX at DNA lesions to the threshold required for recruitment of tp53bp1 and brca1. Catalyzes monoubiquitination of 'Lys-13' and 'Lys-15' of nucleosomal histone H2A (H2AK13Ub and H2AK15Ub, respectively). The polypeptide is E3 ubiquitin-protein ligase rnf168 (Xenopus tropicalis (Western clawed frog)).